A 498-amino-acid chain; its full sequence is Glycerol kinase (498 aa).

Thr12 contributes to the ADP binding site. Residues Thr12, Thr13, and Ser14 each contribute to the ATP site. Position 12 (Thr12) interacts with sn-glycerol 3-phosphate. Residue Arg16 participates in ADP binding. Arg82, Glu83, and Tyr134 together coordinate sn-glycerol 3-phosphate. Glycerol-binding residues include Arg82, Glu83, and Tyr134. A Phosphohistidine; by HPr modification is found at His230. Residue Asp244 participates in sn-glycerol 3-phosphate binding. Glycerol is bound by residues Asp244 and Gln245. ADP-binding residues include Thr266 and Gly309. Residues Thr266, Gly309, Gln313, and Gly410 each contribute to the ATP site. ADP contacts are provided by Gly410 and Asn414.

This sequence belongs to the FGGY kinase family. Homotetramer and homodimer (in equilibrium). The phosphoenolpyruvate-dependent sugar phosphotransferase system (PTS), including enzyme I, and histidine-containing protein (HPr) are required for the phosphorylation, which leads to the activation of the enzyme.

The catalysed reaction is glycerol + ATP = sn-glycerol 3-phosphate + ADP + H(+). The protein operates within polyol metabolism; glycerol degradation via glycerol kinase pathway; sn-glycerol 3-phosphate from glycerol: step 1/1. With respect to regulation, activated by phosphorylation and inhibited by fructose 1,6-bisphosphate (FBP). Key enzyme in the regulation of glycerol uptake and metabolism. Catalyzes the phosphorylation of glycerol to yield sn-glycerol 3-phosphate. This is Glycerol kinase from Staphylococcus aureus (strain Mu50 / ATCC 700699).